We begin with the raw amino-acid sequence, 39 residues long: Larval cuticle protein SC6 (39 aa).

In terms of domain architecture, Chitin-binding type R&amp;R spans 15–39 (VDQFKYGLELDNSIKADQEGHLEGD).

Component of the cuticle of the larva of flesh fly. This Sarcophaga bullata (Grey flesh fly) protein is Larval cuticle protein SC6.